We begin with the raw amino-acid sequence, 237 residues long: MSQPFFQFKQFTVWHDKCAMKVGTDGVLLGAWTPVESSARILDIGTGTGLVALMLAQRCSASVIALEIDGKAAQQAAENITRSPWGSRIEVVCQDFRLYSNKNNSLKYDTIVSNPPYFTDSLKCPDSQRNTARHNDNLSYEELLKGVSNLLSPNGTFTVVIPMDASDSFKDIASSQGLYPSRQLLVITKPGAPPKRTLISFTFIKQDCKEEKLLTEVARHRYSDEYIKLTREFYLKM.

It belongs to the methyltransferase superfamily. tRNA (adenine-N(6)-)-methyltransferase family.

It is found in the cytoplasm. It carries out the reaction adenosine(37) in tRNA1(Val) + S-adenosyl-L-methionine = N(6)-methyladenosine(37) in tRNA1(Val) + S-adenosyl-L-homocysteine + H(+). In terms of biological role, specifically methylates the adenine in position 37 of tRNA(1)(Val) (anticodon cmo5UAC). This is tRNA1(Val) (adenine(37)-N6)-methyltransferase from Bacteroides fragilis (strain YCH46).